The following is a 368-amino-acid chain: MSGMELSYRRSDLIFKRPAGTSRGVLTSKPTWFVRLDIDGHGGQGEVSLIPGLSLDPEEQIGRELDLLARRLRAEEPIRLRQFLAERGGADFSDYRSVLTDIAGILDSWQVSTDGRFPALRFALEMALLDLLSGGRQEWFASDFTRGEKRIPVNGLIWMGEAAFMQEQIEAKLAEGYGCLKLKIGAIDFDKECALLAGIRESFSPQQLEIRVDANGAFSPANAPQRLKRLSQFHLHSIEQPIRQHQWSEMAALCANSPLAIALDEELIGLGAEQRSAMLDAIRPQYIILKPSLLGGFHYAGQWIELARERGIGFWITSALESNLGLAAIAQWTALYQPTMPQGLGTGQLYTNNLPSNLAVDGGLLGVS.

The active-site Proton donor is lysine 183. Positions 213, 239, and 264 each coordinate Mg(2+). The active-site Proton acceptor is lysine 290.

The protein belongs to the mandelate racemase/muconate lactonizing enzyme family. MenC type 1 subfamily. As to quaternary structure, monomer. It depends on a divalent metal cation as a cofactor.

It catalyses the reaction (1R,6R)-6-hydroxy-2-succinyl-cyclohexa-2,4-diene-1-carboxylate = 2-succinylbenzoate + H2O. It participates in quinol/quinone metabolism; 1,4-dihydroxy-2-naphthoate biosynthesis; 1,4-dihydroxy-2-naphthoate from chorismate: step 4/7. Its pathway is cofactor biosynthesis; phylloquinone biosynthesis. In terms of biological role, converts 2-succinyl-6-hydroxy-2,4-cyclohexadiene-1-carboxylate (SHCHC) to 2-succinylbenzoate (OSB). Does not show N-succinylamino acid racemase (NSAR) activity with N-succinyl-L-phenylglycine as substrate. The protein is o-succinylbenzoate synthase of Desulfotalea psychrophila (strain LSv54 / DSM 12343).